The chain runs to 467 residues: ATP synthase subunit beta (467 aa).

An ATP-binding site is contributed by 156-163 (GGAGVGKT).

The protein belongs to the ATPase alpha/beta chains family. As to quaternary structure, F-type ATPases have 2 components, CF(1) - the catalytic core - and CF(0) - the membrane proton channel. CF(1) has five subunits: alpha(3), beta(3), gamma(1), delta(1), epsilon(1). CF(0) has three main subunits: a(1), b(2) and c(9-12). The alpha and beta chains form an alternating ring which encloses part of the gamma chain. CF(1) is attached to CF(0) by a central stalk formed by the gamma and epsilon chains, while a peripheral stalk is formed by the delta and b chains.

The protein localises to the cell inner membrane. The catalysed reaction is ATP + H2O + 4 H(+)(in) = ADP + phosphate + 5 H(+)(out). Produces ATP from ADP in the presence of a proton gradient across the membrane. The catalytic sites are hosted primarily by the beta subunits. The chain is ATP synthase subunit beta from Cupriavidus pinatubonensis (strain JMP 134 / LMG 1197) (Cupriavidus necator (strain JMP 134)).